Here is a 64-residue protein sequence, read N- to C-terminus: Large ribosomal subunit protein bL33 (64 aa).

Positions 16–25 (EARTSSEPRR) are enriched in basic and acidic residues. The tract at residues 16–41 (EARTSSEPRRSNGVSRYTTEKNKRNT) is disordered.

Belongs to the bacterial ribosomal protein bL33 family.

The sequence is that of Large ribosomal subunit protein bL33 from Prochlorococcus marinus subsp. pastoris (strain CCMP1986 / NIES-2087 / MED4).